The following is a 462-amino-acid chain: Exodeoxyribonuclease 7 large subunit (462 aa).

Belongs to the XseA family. Heterooligomer composed of large and small subunits.

Its subcellular location is the cytoplasm. The enzyme catalyses Exonucleolytic cleavage in either 5'- to 3'- or 3'- to 5'-direction to yield nucleoside 5'-phosphates.. Its function is as follows. Bidirectionally degrades single-stranded DNA into large acid-insoluble oligonucleotides, which are then degraded further into small acid-soluble oligonucleotides. The chain is Exodeoxyribonuclease 7 large subunit from Proteus mirabilis (strain HI4320).